Here is a 375-residue protein sequence, read N- to C-terminus: Hydrogenase-1 small chain (375 aa).

The tat-type signal signal peptide spans 1–47 (MNTNNEETFYQAMRRKGVSRRSFLKYCSLAATSLGLGAAMTPRIAWA). 8 residues coordinate [4Fe-4S] cluster: Cys64, Cys67, Cys162, Cys196, His234, Cys237, Cys262, and Cys268. Residues Cys277, Cys296, and Cys299 each coordinate [3Fe-4S] cluster. A disordered region spans residues 353–375 (HNRHKQQLADAGQQSPDNEDKQA).

The protein belongs to the [NiFe]/[NiFeSe] hydrogenase small subunit family. In terms of assembly, heterodimer of a large and a small subunit. [4Fe-4S] cluster serves as cofactor. [3Fe-4S] cluster is required as a cofactor. Post-translationally, predicted to be exported by the Tat system. The position of the signal peptide cleavage has not been experimentally proven.

It is found in the cell membrane. The catalysed reaction is H2 + A = AH2. The protein is Hydrogenase-1 small chain (hyaA) of Citrobacter freundii.